The sequence spans 141 residues: HTH-type transcriptional regulator LrpA (141 aa).

The HTH asnC-type domain maps to 2 to 63 (IDERDKIILE…RINPKKLGYS (62 aa)). A DNA-binding region (H-T-H motif) is located at residues 21 to 40 (FTEIAKKLGISETAVRKRVK).

In terms of assembly, homooctamer; tetramer of dimers.

Its function is as follows. DNA-binding protein that negatively regulates its own transcription. Interferes with RNA polymerase (RNAP) recruitment by inhibiting the association of RNAP with the TBP-TFB promoter complex. The sequence is that of HTH-type transcriptional regulator LrpA (lrpA) from Pyrococcus horikoshii (strain ATCC 700860 / DSM 12428 / JCM 9974 / NBRC 100139 / OT-3).